Consider the following 494-residue polypeptide: Nicotianamine aminotransferase 1 (494 aa).

Composition is skewed to low complexity over residues 24 to 38 and 48 to 62; these read SGTSYPTRTTTTSSS and STAMAPTTAAAAASS. The tract at residues 24–76 is disordered; that stretch reads SGTSYPTRTTTTSSSAPEFTNKKQSTAMAPTTAAAAASSNGGGESDGSSKEWR. Residue Lys-322 is modified to N6-(pyridoxal phosphate)lysine.

The protein belongs to the class-I pyridoxal-phosphate-dependent aminotransferase family. Pyridoxal 5'-phosphate is required as a cofactor. As to expression, expressed in companion and pericycle cells adjacent to the protoxylem of roots. Expressed in companion cells of shoots.

It carries out the reaction nicotianamine + 2-oxoglutarate = 3''-deamino-3''-oxonicotianamine + L-glutamate. Involved in biosynthesis of mugineic acid family phytosiderophores, which are ferric iron chelators produced in graminaceous plants in response to iron deficiency. In Oryza sativa subsp. japonica (Rice), this protein is Nicotianamine aminotransferase 1.